Reading from the N-terminus, the 139-residue chain is Large ribosomal subunit protein uL13 (139 aa).

Belongs to the universal ribosomal protein uL13 family. In terms of assembly, part of the 50S ribosomal subunit.

Its function is as follows. This protein is one of the early assembly proteins of the 50S ribosomal subunit, although it is not seen to bind rRNA by itself. It is important during the early stages of 50S assembly. The chain is Large ribosomal subunit protein uL13 from Nitratiruptor sp. (strain SB155-2).